The sequence spans 296 residues: Telomere repeat-binding factor 4 (296 aa).

The 62-residue stretch at 1 to 62 (MGNQKLKWTA…WRNLSVAPGI (62 aa)) folds into the HTH myb-type domain. A DNA-binding region (H-T-H motif) is located at residues 28-58 (WKNILRDPELAEQLSSRSNIDLKDKWRNLSV). Positions 126-200 (NAPRYDGMIF…STQNFYKMND (75 aa)) constitute an H15 domain. Residues 197–232 (KMNDNSLVQRTPHVARPKESNTKSRQQTNSQGPSIS) are disordered. A compositionally biased stretch (polar residues) spans 219-232 (KSRQQTNSQGPSIS). The stretch at 245–282 (KLVEVENKLDVSKGAAEEIERLMKLAEEADEMLVIARE) forms a coiled coil.

It belongs to the histone H1/H5 family. SMH subfamily.

The protein localises to the nucleus. It is found in the chromosome. Functionally, binds preferentially double-stranded telomeric repeats. This is Telomere repeat-binding factor 4 from Arabidopsis thaliana (Mouse-ear cress).